Consider the following 235-residue polypeptide: Large ribosomal subunit protein uL1 (235 aa).

The protein belongs to the universal ribosomal protein uL1 family. As to quaternary structure, part of the 50S ribosomal subunit.

Binds directly to 23S rRNA. The L1 stalk is quite mobile in the ribosome, and is involved in E site tRNA release. In terms of biological role, protein L1 is also a translational repressor protein, it controls the translation of the L11 operon by binding to its mRNA. This is Large ribosomal subunit protein uL1 from Prochlorococcus marinus (strain MIT 9313).